The chain runs to 382 residues: MSTWLLPENIADVLPSEARKIEELRRRLLDRFRSYGYEMVMPPLLEYLESLLTSGGADLRLRTFKLVDQLSGRTLGLRADITPQVARIDAHLLNRQGVTRLCYAGHVMHTRPRGLHATREQIQIGAEIYGHAGLEADLEIQQLMLDALHLAGLSRIRLDLGHAGVLAALLARDAQAAERGESLYDALSGKDVPLLNELTDDLGADTRAALRALPHLYGDASVLAEARTRLPVLPEITRALDDLAQLAAQAKGAEVAIDLGDLRGYAYHSGAMFSAYIDGVPNAIARGGRYDHVGQAYGRARPATGFSLDLRELARISPVEARGTAILAPWAQDDALSAAVAALRDAGEVVIQALPGHDHVLDEFACDRSLVERNGAWVVEPR.

The protein belongs to the class-II aminoacyl-tRNA synthetase family. HisZ subfamily. As to quaternary structure, heteromultimer composed of HisG and HisZ subunits.

It is found in the cytoplasm. Its pathway is amino-acid biosynthesis; L-histidine biosynthesis; L-histidine from 5-phospho-alpha-D-ribose 1-diphosphate: step 1/9. Required for the first step of histidine biosynthesis. May allow the feedback regulation of ATP phosphoribosyltransferase activity by histidine. This is ATP phosphoribosyltransferase regulatory subunit from Burkholderia lata (strain ATCC 17760 / DSM 23089 / LMG 22485 / NCIMB 9086 / R18194 / 383).